A 356-amino-acid chain; its full sequence is 1,2-phenylacetyl-CoA epoxidase, subunit E (356 aa).

One can recognise an FAD-binding FR-type domain in the interval 2-106 (TTFHSLTVAK…MVPQGHFGYQ (105 aa)). Residues 112 to 228 (QGRYLAIAAG…AAMMDDAETA (117 aa)) are oxidoreductase. A 2Fe-2S ferredoxin-type domain is found at 262-354 (QKVTVRQDGR…DVVVDFDAKG (93 aa)). Residues C299, C304, C307, and C337 each contribute to the [2Fe-2S] cluster site.

In the N-terminal section; belongs to the FAD-binding oxidoreductase type 6 family. The cofactor is [2Fe-2S] cluster. It depends on FAD as a cofactor.

It participates in aromatic compound metabolism; phenylacetate degradation. Component of 1,2-phenylacetyl-CoA epoxidase multicomponent enzyme system which catalyzes the reduction of phenylacetyl-CoA (PA-CoA) to form 1,2-epoxyphenylacetyl-CoA. The subunit E is a reductase with a preference for NADPH and FAD, capable of reducing cytochrome c. The sequence is that of 1,2-phenylacetyl-CoA epoxidase, subunit E (paaE) from Escherichia coli (strain K12).